Reading from the N-terminus, the 408-residue chain is Putative odorant receptor 92a (408 aa).

The Cytoplasmic segment spans residues 1-52 (MLFRKRKPKSDDEVITFDELTRFPMTFYKTIGEDLYSDRDPNVIRRYLLRFY). The helical transmembrane segment at 53-73 (LVLGFLNFNAYVVGEIAYFIV) threads the bilayer. A topological domain (extracellular) is located at residue His-74. A helical transmembrane segment spans residues 75–95 (IMSTTTLLEATAVAPCIGFSF). The Cytoplasmic segment spans residues 96 to 144 (MADFKQFGLTVNRKRLVRLLDDLKEIFPLDLEAQRKYNVSFYRKHMNRV). A helical membrane pass occupies residues 145-165 (MTLFTILCMTYTSSFSFYPAI). The Extracellular portion of the chain corresponds to 166–209 (KSTIKYYLMGSEIFERNYGFHILFPYDAETDLTVYWFSYWGLAH). The chain crosses the membrane as a helical span at residues 210-230 (CAYVAGVSYVCVDLLLIATIT). The Cytoplasmic portion of the chain corresponds to 231–276 (QLTMHFNFIANDLEAYEGGDHTDEENIKYLHNLVVYHARALDLSEE). Residues 277 to 301 (VNNIFSFLILWNFIAASLVICFAGF) form a helical membrane-spanning segment. Residues 302-310 (QITASNVED) lie on the Extracellular side of the membrane. The helical transmembrane segment at 311–331 (IVLYFIFFSASLVQVFVVCYY) threads the bilayer. The Cytoplasmic segment spans residues 332–378 (GDEMISSSSRIGHSAFNQNWLPCSTKYKRILQFIIARSQKPASIRPP). Residues 379-399 (TFPPISFNTFMKVISMSYQFF) form a helical membrane-spanning segment. Over 400–408 (ALLRTTYYG) the chain is Extracellular.

The protein belongs to the insect chemoreceptor superfamily. Heteromeric odorant receptor channel (TC 1.A.69) family. Or49a subfamily. Interacts with Orco. Complexes exist early in the endomembrane system in olfactory sensory neurons (OSNs), coupling these complexes to the conserved ciliary trafficking pathway.

It localises to the cell membrane. Functionally, odorant receptor which mediates acceptance or avoidance behavior, depending on its substrates. The odorant receptor repertoire encodes a large collection of odor stimuli that vary widely in identity, intensity, and duration. May form a complex with Orco to form odorant-sensing units, providing sensitive and prolonged odorant signaling and calcium permeability. This Drosophila melanogaster (Fruit fly) protein is Putative odorant receptor 92a (Or92a).